A 68-amino-acid polypeptide reads, in one-letter code: Large ribosomal subunit protein bL32 (68 aa).

This sequence belongs to the bacterial ribosomal protein bL32 family.

In Orientia tsutsugamushi (strain Boryong) (Rickettsia tsutsugamushi), this protein is Large ribosomal subunit protein bL32.